A 473-amino-acid polypeptide reads, in one-letter code: Ribulose bisphosphate carboxylase large chain 2 (473 aa).

Residues Asn116 and Thr166 each contribute to the substrate site. Lys168 (proton acceptor) is an active-site residue. Lys170 provides a ligand contact to substrate. Mg(2+) contacts are provided by Lys194, Asp196, and Glu197. Lys194 carries the N6-carboxylysine modification. His287 acts as the Proton acceptor in catalysis. Substrate contacts are provided by Arg288, His320, and Ser372.

The protein belongs to the RuBisCO large chain family. Type I subfamily. In terms of assembly, heterohexadecamer of 8 large chains and 8 small chains. It depends on Mg(2+) as a cofactor.

It carries out the reaction 2 (2R)-3-phosphoglycerate + 2 H(+) = D-ribulose 1,5-bisphosphate + CO2 + H2O. The enzyme catalyses D-ribulose 1,5-bisphosphate + O2 = 2-phosphoglycolate + (2R)-3-phosphoglycerate + 2 H(+). RuBisCO catalyzes two reactions: the carboxylation of D-ribulose 1,5-bisphosphate, the primary event in carbon dioxide fixation, as well as the oxidative fragmentation of the pentose substrate. Both reactions occur simultaneously and in competition at the same active site. This is Ribulose bisphosphate carboxylase large chain 2 from Acidithiobacillus ferrooxidans (Thiobacillus ferrooxidans).